Consider the following 502-residue polypeptide: Cytochrome P450 monooxygenase AacuE (502 aa).

Residues Ala-4–Pro-26 traverse the membrane as a helical segment. N-linked (GlcNAc...) asparagine glycosylation occurs at Asn-393. Cys-439 contacts heme.

It belongs to the cytochrome P450 family. The cofactor is heme.

It is found in the membrane. Its pathway is secondary metabolite biosynthesis. Its function is as follows. Cytochrome P450 monooxygenase; part of the gene cluster that mediates the biosynthesis of the tetrahydroxanthone dimer secalonic acid D. The pathway begins with the synthesis of atrochrysone thioester by the polyketide synthase AacuL. The atrochrysone carboxyl ACP thioesterase AacuM then breaks the thioester bond and releases the atrochrysone carboxylic acid from AacuL. Atrochrysone carboxylic acid is decarboxylated by the decarboxylase AacuI, and oxidized by the anthrone oxygenase AacuG to yield emodin. Emodin is then reduced to emodin hydroquinone by a yet unidentified oxidoreductase. A-ring reduction by the short chain dehydrogenase AacuN, dehydration by the scytalone dehydratase-like protein AacuK and probable spontaneous re-oxidation, results in overall deoxygenation to chrysophanol. Baeyer-Villiger oxidation by the Baeyer-Villiger monooxygenase (BVMO) AacuH then yields monodictyphenone. Monodictyphenone is transformed into compounds with the tetrahydroxanthone skeleton via methylesterification by the methyltransferase AacuQ, followed by the action of the flavin-dependent monooxygenase AacuC, the isomerase AacuP, and the short chain dehydrogenase/reductase AacuF or AacuD. AacuF and AacuD should accept the same compound as a substrate but perform the ketoreduction with a different stereoselectivity, thus yielding blennolides B and A, respectively. In the final step of the biosynthesis, the cytochrome P450 monooxygenase AacuE accepts blennolide B and/or blennolide A to conduct the dimerization reaction to furnish the tetrahydroxanthone dimers, secalonic acids D, B, and F. The protein is Cytochrome P450 monooxygenase AacuE of Aspergillus aculeatus (strain ATCC 16872 / CBS 172.66 / WB 5094).